Consider the following 355-residue polypeptide: Protein-glutamate methylesterase/protein-glutamine glutaminase (355 aa).

Residues 7-123 (AAVVVDDSQF…SVGIKQQQDE (117 aa)) form the Response regulatory domain. 4-aspartylphosphate is present on aspartate 57. The tract at residues 139 to 159 (TEAAAERTTSTATSTTTSRSA) is disordered. Residues 161 to 355 (EYVDKPTLVI…DGVLDTIMRE (195 aa)) enclose the CheB-type methylesterase domain. Active-site residues include serine 173, histidine 200, and aspartate 297.

The protein belongs to the CheB family. In terms of processing, phosphorylated by CheA. Phosphorylation of the N-terminal regulatory domain activates the methylesterase activity.

The protein localises to the cytoplasm. The enzyme catalyses [protein]-L-glutamate 5-O-methyl ester + H2O = L-glutamyl-[protein] + methanol + H(+). It carries out the reaction L-glutaminyl-[protein] + H2O = L-glutamyl-[protein] + NH4(+). In terms of biological role, involved in chemotaxis. Part of a chemotaxis signal transduction system that modulates chemotaxis in response to various stimuli. Catalyzes the demethylation of specific methylglutamate residues introduced into the chemoreceptors (methyl-accepting chemotaxis proteins or MCP) by CheR. Also mediates the irreversible deamidation of specific glutamine residues to glutamic acid. In Natronomonas pharaonis (strain ATCC 35678 / DSM 2160 / CIP 103997 / JCM 8858 / NBRC 14720 / NCIMB 2260 / Gabara) (Halobacterium pharaonis), this protein is Protein-glutamate methylesterase/protein-glutamine glutaminase.